The sequence spans 412 residues: Serine hydroxymethyltransferase (412 aa).

Residues Leu120 and 124-126 (GHL) each bind (6S)-5,6,7,8-tetrahydrofolate. Lys229 is modified (N6-(pyridoxal phosphate)lysine). A (6S)-5,6,7,8-tetrahydrofolate-binding site is contributed by 352-354 (SPF).

It belongs to the SHMT family. In terms of assembly, homodimer. The cofactor is pyridoxal 5'-phosphate.

Its subcellular location is the cytoplasm. It carries out the reaction (6R)-5,10-methylene-5,6,7,8-tetrahydrofolate + glycine + H2O = (6S)-5,6,7,8-tetrahydrofolate + L-serine. The protein operates within one-carbon metabolism; tetrahydrofolate interconversion. It participates in amino-acid biosynthesis; glycine biosynthesis; glycine from L-serine: step 1/1. Functionally, catalyzes the reversible interconversion of serine and glycine with tetrahydrofolate (THF) serving as the one-carbon carrier. This reaction serves as the major source of one-carbon groups required for the biosynthesis of purines, thymidylate, methionine, and other important biomolecules. Also exhibits THF-independent aldolase activity toward beta-hydroxyamino acids, producing glycine and aldehydes, via a retro-aldol mechanism. This is Serine hydroxymethyltransferase from Ruminiclostridium cellulolyticum (strain ATCC 35319 / DSM 5812 / JCM 6584 / H10) (Clostridium cellulolyticum).